The following is a 788-amino-acid chain: Choline transporter-like protein 1 (788 aa).

The helical transmembrane segment at 98 to 118 (FLFFVFLCGWVVVASLGIMWG) threads the bilayer. A glycan (N-linked (GlcNAc...) asparagine) is linked at Asn-276. Helical transmembrane passes span 329 to 349 (WWQTLILIFAAGMLSFIWTVI), 352 to 372 (LLGSLLIWLSIFLVLGALGFG), 409 to 429 (FVVAIATSVLLVIFLLVILFI), and 458 to 478 (LFPFLLHIGVFALWGSIAIWL). Asn-497 carries N-linked (GlcNAc...) asparagine glycosylation. 5 consecutive transmembrane segments (helical) span residues 531-551 (LFAFFWLSCFVTALGDIALAG), 583-603 (LGSIAFGSLIIAIVKIIRVML), 620-640 (WFLMCLKCCFWCLEMFFKFLT), 679-699 (AGILLFLGKAMITLGMGILSF), and 718-738 (YYFVPIVIVVIGSYFMADLFF).

Belongs to the CTL (choline transporter-like) family.

The protein resides in the membrane. The protein is Choline transporter-like protein 1 (chtl-1) of Caenorhabditis briggsae.